Here is a 269-residue protein sequence, read N- to C-terminus: Small ribosomal subunit protein uS3 (269 aa).

Residues 38–106 form the KH type-2 domain; that stretch reads IREWLHKNLE…QIQLNILEVK (69 aa). The disordered stretch occupies residues 215–269; the sequence is AQKAARQAAQGGRGGRGGNRRGRGDRPDRRGGRRRAEAAKQSAETPAPQTENAGA. A compositionally biased stretch (basic and acidic residues) spans 236-252; sequence GRGDRPDRRGGRRRAEA. Residues 256–269 are compositionally biased toward polar residues; the sequence is SAETPAPQTENAGA.

It belongs to the universal ribosomal protein uS3 family. In terms of assembly, part of the 30S ribosomal subunit. Forms a tight complex with proteins S10 and S14.

In terms of biological role, binds the lower part of the 30S subunit head. Binds mRNA in the 70S ribosome, positioning it for translation. The protein is Small ribosomal subunit protein uS3 of Cutibacterium acnes (strain DSM 16379 / KPA171202) (Propionibacterium acnes).